Consider the following 563-residue polypeptide: Chaperonin GroEL 1 (563 aa).

ATP contacts are provided by residues 29-32 (TIGP), 86-90 (DGTTT), Gly-413, 476-478 (NAA), and Asp-492. A disordered region spans residues 520 to 545 (DKPEPPSPAGGEGGGDPMGGMGGMGG). Residues 529-545 (GGEGGGDPMGGMGGMGG) are compositionally biased toward gly residues.

Belongs to the chaperonin (HSP60) family. Forms a cylinder of 14 subunits composed of two heptameric rings stacked back-to-back. Interacts with the co-chaperonin GroES.

It is found in the cytoplasm. The catalysed reaction is ATP + H2O + a folded polypeptide = ADP + phosphate + an unfolded polypeptide.. In terms of biological role, together with its co-chaperonin GroES, plays an essential role in assisting protein folding. The GroEL-GroES system forms a nano-cage that allows encapsulation of the non-native substrate proteins and provides a physical environment optimized to promote and accelerate protein folding. In Prochlorococcus marinus (strain SARG / CCMP1375 / SS120), this protein is Chaperonin GroEL 1.